An 845-amino-acid chain; its full sequence is Protein P (845 aa).

The segment at 1-179 (MPLSYQHFLK…FCGSPYSWEQ (179 aa)) is terminal protein domain (TP). A spacer region spans residues 180–348 (ELHHGRLVTK…YCLSHLVNLL (169 aa)). 2 disordered regions span residues 188–211 (TKTSQRHGDKSVCSQPSGILSRSS) and 288–317 (YSHLSTSKRQSSSGHKVEFPSFPPSSARSQ). 2 stretches are compositionally biased toward polar residues: residues 199–211 (VCSQPSGILSRSS) and 290–301 (HLSTSKRQSSSG). The interval 349 to 692 (EDWGPCTDHG…YMNLYPVARQ (344 aa)) is polymerase/reverse transcriptase domain (RT). Residues 359–602 (EHHIRIPRTP…YSLNFMGYII (244 aa)) enclose the Reverse transcriptase domain. Mg(2+) is bound by residues D431, D553, and D554.

It belongs to the hepadnaviridae P protein family.

It catalyses the reaction DNA(n) + a 2'-deoxyribonucleoside 5'-triphosphate = DNA(n+1) + diphosphate. It carries out the reaction Endonucleolytic cleavage to 5'-phosphomonoester.. Its activity is regulated as follows. Activated by host HSP70 and HSP40 in vitro to be able to bind the epsilon loop of the pgRNA. Because deletion of the RNase H region renders the protein partly chaperone-independent, the chaperones may be needed indirectly to relieve occlusion of the RNA-binding site by this domain. Inhibited by several reverse-transcriptase inhibitors: Lamivudine, Adefovir and Entecavir. In terms of biological role, multifunctional enzyme that converts the viral RNA genome into dsDNA in viral cytoplasmic capsids. This enzyme displays a DNA polymerase activity that can copy either DNA or RNA templates, and a ribonuclease H (RNase H) activity that cleaves the RNA strand of RNA-DNA heteroduplexes in a partially processive 3'- to 5'-endonucleasic mode. Neo-synthesized pregenomic RNA (pgRNA) are encapsidated together with the P protein, and reverse-transcribed inside the nucleocapsid. Initiation of reverse-transcription occurs first by binding the epsilon loop on the pgRNA genome, and is initiated by protein priming, thereby the 5'-end of (-)DNA is covalently linked to P protein. Partial (+)DNA is synthesized from the (-)DNA template and generates the relaxed circular DNA (RC-DNA) genome. After budding and infection, the RC-DNA migrates in the nucleus, and is converted into a plasmid-like covalently closed circular DNA (cccDNA). The activity of P protein does not seem to be necessary for cccDNA generation, and is presumably released from (+)DNA by host nuclear DNA repair machinery. This is Protein P from Homo sapiens (Human).